Here is a 202-residue protein sequence, read N- to C-terminus: Holliday junction resolvase RecU (202 aa).

Threonine 85, aspartate 87, glutamate 100, and glutamine 119 together coordinate Mg(2+).

The protein belongs to the RecU family. Mg(2+) serves as cofactor.

Its subcellular location is the cytoplasm. The enzyme catalyses Endonucleolytic cleavage at a junction such as a reciprocal single-stranded crossover between two homologous DNA duplexes (Holliday junction).. Functionally, endonuclease that resolves Holliday junction intermediates in genetic recombination. Cleaves mobile four-strand junctions by introducing symmetrical nicks in paired strands. Promotes annealing of linear ssDNA with homologous dsDNA. Required for DNA repair, homologous recombination and chromosome segregation. This Streptococcus pyogenes serotype M5 (strain Manfredo) protein is Holliday junction resolvase RecU.